We begin with the raw amino-acid sequence, 106 residues long: Putative double-stranded DNA mimic protein VCM66_1163 (106 aa).

The protein belongs to the putative dsDNA mimic protein family.

May act as a double-stranded DNA (dsDNA) mimic. Probably regulates the activity of a dsDNA-binding protein. The sequence is that of Putative double-stranded DNA mimic protein VCM66_1163 from Vibrio cholerae serotype O1 (strain M66-2).